A 176-amino-acid polypeptide reads, in one-letter code: Small ribosomal subunit protein uS5 (176 aa).

An S5 DRBM domain is found at 14–77 (MQEKLIHINR…DQARRWMTSI (64 aa)).

The protein belongs to the universal ribosomal protein uS5 family. As to quaternary structure, part of the 30S ribosomal subunit. Contacts proteins S4 and S8.

With S4 and S12 plays an important role in translational accuracy. Functionally, located at the back of the 30S subunit body where it stabilizes the conformation of the head with respect to the body. In Acidithiobacillus ferrooxidans (strain ATCC 23270 / DSM 14882 / CIP 104768 / NCIMB 8455) (Ferrobacillus ferrooxidans (strain ATCC 23270)), this protein is Small ribosomal subunit protein uS5.